The following is a 647-amino-acid chain: ATP-dependent zinc metalloprotease FtsH (647 aa).

The segment at 1-33 is disordered; it reads MARKSDEDTNPMDKFMDRLRGSPGDGGPGRPDP. The Cytoplasmic segment spans residues 1–39; the sequence is MARKSDEDTNPMDKFMDRLRGSPGDGGPGRPDPSQRKVH. Residues 40 to 60 form a helical membrane-spanning segment; it reads FSIWYFILALLLIVWMQTYMG. Residues 61–134 are Periplasmic-facing; the sequence is EQQSEKISYS…RFSGDVQNPW (74 aa). The chain crosses the membrane as a helical span at residues 135-155; sequence LGLITWWLLPFAIMIFFWSFL. The Cytoplasmic segment spans residues 156–647; it reads MRRMGGGPQG…DPVQVEGGAA (492 aa). An ATP-binding site is contributed by 227 to 234; that stretch reads GAPGTGKT. Residue His449 coordinates Zn(2+). Glu450 is an active-site residue. Zn(2+) contacts are provided by His453 and Asp526.

It in the central section; belongs to the AAA ATPase family. In the C-terminal section; belongs to the peptidase M41 family. Homohexamer. It depends on Zn(2+) as a cofactor.

The protein resides in the cell inner membrane. Acts as a processive, ATP-dependent zinc metallopeptidase for both cytoplasmic and membrane proteins. Plays a role in the quality control of integral membrane proteins. The polypeptide is ATP-dependent zinc metalloprotease FtsH (Syntrophobacter fumaroxidans (strain DSM 10017 / MPOB)).